The chain runs to 277 residues: Eukaryotic translation initiation factor 3 subunit J (277 aa).

The segment at 1–80 (MSWDDEDFAV…PAATKNTMLD (80 aa)) is disordered. A compositionally biased stretch (acidic residues) spans 23 to 43 (WDDEFAENDDEPVLESWEDEE). Over residues 50–75 (KAAAAAAAKAPKKASPSPAATPAATK) the composition is skewed to low complexity. Positions 199-230 (TVENIRQTIATLNVLMKDKEREERQARLAKVK) form a coiled coil. A disordered region spans residues 257-277 (DNDFDLGGNDNFDDFGEDDFM). The segment covering 267–277 (NFDDFGEDDFM) has biased composition (acidic residues).

This sequence belongs to the eIF-3 subunit J family. In terms of assembly, component of the eukaryotic translation initiation factor 3 (eIF-3) complex.

It localises to the cytoplasm. Its function is as follows. Component of the eukaryotic translation initiation factor 3 (eIF-3) complex, which is involved in protein synthesis of a specialized repertoire of mRNAs and, together with other initiation factors, stimulates binding of mRNA and methionyl-tRNAi to the 40S ribosome. The eIF-3 complex specifically targets and initiates translation of a subset of mRNAs involved in cell proliferation. The sequence is that of Eukaryotic translation initiation factor 3 subunit J from Kluyveromyces lactis (strain ATCC 8585 / CBS 2359 / DSM 70799 / NBRC 1267 / NRRL Y-1140 / WM37) (Yeast).